The primary structure comprises 416 residues: Phosphoglycerate kinase (416 aa).

(2R)-3-phosphoglycerate contacts are provided by valine 23, aspartate 24, phenylalanine 25, asparagine 26, glutamine 38, arginine 39, serine 62, histidine 63, glycine 65, arginine 66, leucine 121, arginine 122, histidine 168, and arginine 169. Residue glycine 212 participates in ADP binding. Glycine 212 serves as a coordination point for CDP. AMP-binding residues include alanine 213 and lysine 214. Alanine 213 provides a ligand contact to ATP. Alanine 213 provides a ligand contact to Mg(2+). Mg(2+)-binding residues include alanine 216 and aspartate 217. Aspartate 217 is a CDP binding site. An AMP-binding site is contributed by lysine 218. Lysine 218 is a binding site for ATP. Glycine 236 provides a ligand contact to ADP. Glycine 236 is a binding site for CDP. 2 residues coordinate AMP: glycine 237 and glycine 311. Positions 237 and 311 each coordinate ATP. Residues glycine 336 and phenylalanine 341 each coordinate CDP. Phenylalanine 341 contacts ADP. Position 342 (glutamate 342) interacts with AMP. Residues glutamate 342, aspartate 373, and threonine 374 each contribute to the ATP site. Aspartate 373 is a binding site for Mg(2+).

It belongs to the phosphoglycerate kinase family. Monomer. It depends on Mg(2+) as a cofactor.

The protein resides in the cytoplasm. Its subcellular location is the mitochondrion. The catalysed reaction is (2R)-3-phosphoglycerate + ATP = (2R)-3-phospho-glyceroyl phosphate + ADP. It participates in carbohydrate degradation; glycolysis; pyruvate from D-glyceraldehyde 3-phosphate: step 2/5. Functionally, catalyzes one of the two ATP producing reactions in the glycolytic pathway via the reversible conversion of 1,3-diphosphoglycerate to 3-phosphoglycerate. Both L- and D- forms of purine and pyrimidine nucleotides can be used as substrates, but the activity is much lower on pyrimidines. Negatively regulates the biosynthesis of acetyl-CoA from pyruvate in the mitochondrion. In Kluyveromyces lactis (strain ATCC 8585 / CBS 2359 / DSM 70799 / NBRC 1267 / NRRL Y-1140 / WM37) (Yeast), this protein is Phosphoglycerate kinase (PGK).